The sequence spans 350 residues: Chorismate synthase (350 aa).

Arginine 48 contributes to the NADP(+) binding site. FMN is bound by residues 125–127 (RSS), glycine 277, 292–296 (KPIPS), and arginine 318.

This sequence belongs to the chorismate synthase family. As to quaternary structure, homotetramer. Requires FMNH2 as cofactor.

The enzyme catalyses 5-O-(1-carboxyvinyl)-3-phosphoshikimate = chorismate + phosphate. The protein operates within metabolic intermediate biosynthesis; chorismate biosynthesis; chorismate from D-erythrose 4-phosphate and phosphoenolpyruvate: step 7/7. Its function is as follows. Catalyzes the anti-1,4-elimination of the C-3 phosphate and the C-6 proR hydrogen from 5-enolpyruvylshikimate-3-phosphate (EPSP) to yield chorismate, which is the branch point compound that serves as the starting substrate for the three terminal pathways of aromatic amino acid biosynthesis. This reaction introduces a second double bond into the aromatic ring system. This Maridesulfovibrio salexigens (strain ATCC 14822 / DSM 2638 / NCIMB 8403 / VKM B-1763) (Desulfovibrio salexigens) protein is Chorismate synthase.